A 374-amino-acid chain; its full sequence is Probable dual-specificity RNA methyltransferase RlmN 3 (374 aa).

Catalysis depends on glutamate 96, which acts as the Proton acceptor. The region spanning 110–350 (DHSRKTICIS…VTLRREKGHD (241 aa)) is the Radical SAM core domain. Cysteine 117 and cysteine 355 form a disulfide bridge. The [4Fe-4S] cluster site is built by cysteine 124, cysteine 128, and cysteine 131. Residues 181–182 (GE), serine 213, 236–238 (SLH), and asparagine 312 each bind S-adenosyl-L-methionine. Cysteine 355 functions as the S-methylcysteine intermediate in the catalytic mechanism.

Belongs to the radical SAM superfamily. RlmN family. The cofactor is [4Fe-4S] cluster.

The protein localises to the cytoplasm. It catalyses the reaction adenosine(2503) in 23S rRNA + 2 reduced [2Fe-2S]-[ferredoxin] + 2 S-adenosyl-L-methionine = 2-methyladenosine(2503) in 23S rRNA + 5'-deoxyadenosine + L-methionine + 2 oxidized [2Fe-2S]-[ferredoxin] + S-adenosyl-L-homocysteine. The enzyme catalyses adenosine(37) in tRNA + 2 reduced [2Fe-2S]-[ferredoxin] + 2 S-adenosyl-L-methionine = 2-methyladenosine(37) in tRNA + 5'-deoxyadenosine + L-methionine + 2 oxidized [2Fe-2S]-[ferredoxin] + S-adenosyl-L-homocysteine. In terms of biological role, specifically methylates position 2 of adenine 2503 in 23S rRNA and position 2 of adenine 37 in tRNAs. This Opitutus terrae (strain DSM 11246 / JCM 15787 / PB90-1) protein is Probable dual-specificity RNA methyltransferase RlmN 3.